Here is a 265-residue protein sequence, read N- to C-terminus: Chanoclavine-I dehydrogenase easD (265 aa).

An N-terminal signal peptide occupies residues 1 to 20; it reads MSFVSSKIFAITGGASGIGA. NADP(+)-binding residues include Ile-18, Asp-66, Arg-132, Tyr-169, Lys-173, and Thr-205. Tyr-169 (proton donor) is an active-site residue. Lys-173 (lowers pKa of active site Tyr) is an active-site residue.

This sequence belongs to the short-chain dehydrogenases/reductases (SDR) family. As to quaternary structure, homotetramer.

It carries out the reaction chanoclavine-I + NAD(+) = chanoclavine-I aldehyde + NADH + H(+). Its pathway is alkaloid biosynthesis; ergot alkaloid biosynthesis. Its function is as follows. Chanoclavine-I dehydrogenase; part of the gene cluster that mediates the biosynthesis of fungal ergot alkaloid. DmaW catalyzes the first step of ergot alkaloid biosynthesis by condensing dimethylallyl diphosphate (DMAP) and tryptophan to form 4-dimethylallyl-L-tryptophan. The second step is catalyzed by the methyltransferase easF that methylates 4-dimethylallyl-L-tryptophan in the presence of S-adenosyl-L-methionine, resulting in the formation of 4-dimethylallyl-L-abrine. The catalase easC and the FAD-dependent oxidoreductase easE then transform 4-dimethylallyl-L-abrine to chanoclavine-I which is further oxidized by easD in the presence of NAD(+), resulting in the formation of chanoclavine-I aldehyde. Chanoclavine-I aldehyde is the precursor of ergoamides and ergopeptines in Clavicipitaceae, and clavine-type alcaloids such as fumiclavine in Trichocomaceae. However, the metabolites downstream of chanoclavine-I aldehyde in Arthrodermataceae have not been identified yet. The polypeptide is Chanoclavine-I dehydrogenase easD (Trichophyton verrucosum (strain HKI 0517)).